We begin with the raw amino-acid sequence, 140 residues long: Transmembrane protein 107 (140 aa).

2 consecutive transmembrane segments (helical) span residues 7–27 and 53–73; these read LVPS…TLFW and LVAA…GFLS. The N-linked (GlcNAc...) asparagine glycan is linked to asparagine 79. A run of 2 helical transmembrane segments spans residues 83-103 and 113-133; these read SLIS…FIFE and IFVF…VTVF.

Part of the tectonic-like complex (also named B9 complex). Interacts with TMEM237, TMEM231, MKS1 and TMEM216.

The protein localises to the membrane. The protein resides in the cell projection. It localises to the cilium. In terms of biological role, plays a role in cilia formation and embryonic patterning. Requires for normal Sonic hedgehog (Shh) signaling in the neural tube and acts in combination with GLI2 and GLI3 to pattern ventral and intermediate neuronal cell types. During ciliogenesis regulates the ciliary transition zone localization of some MKS complex proteins. The chain is Transmembrane protein 107 from Homo sapiens (Human).